The chain runs to 412 residues: ATP phosphoribosyltransferase regulatory subunit (412 aa).

The protein belongs to the class-II aminoacyl-tRNA synthetase family. HisZ subfamily. Heteromultimer composed of HisG and HisZ subunits.

The protein localises to the cytoplasm. It functions in the pathway amino-acid biosynthesis; L-histidine biosynthesis; L-histidine from 5-phospho-alpha-D-ribose 1-diphosphate: step 1/9. Its function is as follows. Required for the first step of histidine biosynthesis. May allow the feedback regulation of ATP phosphoribosyltransferase activity by histidine. The polypeptide is ATP phosphoribosyltransferase regulatory subunit (Dehalococcoides mccartyi (strain CBDB1)).